The chain runs to 23 residues: Lycosin-II (23 aa).

The residue at position 21 (Leu21) is a Leucine amide.

Expressed by the venom gland.

The protein localises to the secreted. The protein resides in the target cell membrane. Functionally, has strong antibacterial activity and biofilm inhibition effects against Gram-positive and -negative bacteria including E.coli, S.epidermidis, and A.baumannii and oxacillin-resistant S.aureus and meropenem-resistant P.aeruginosa. Is not cytotoxic against human foreskin fibroblast Hs27 or hemolytic against mammalian red blood cells. Its mechanism of action involves binding to lipoteichoic acid and lipopolysaccharide of Gram-positive and Gram-negative bacterial membranes, respectively, to destroy the bacterial membrane. In addition, it shows anti-inflammatory effects by inhibiting the expression of pro-inflammatory cytokines that are increased during bacterial infection in Hs27 cells. The sequence is that of Lycosin-II from Lycosa singoriensis (Wolf spider).